The sequence spans 300 residues: MNQTYGRLVSRAAIAATVMASLLLLIKIFAWWYTGSVSILAALVDSLVDIAASLTNLLVVRYSLQPADDEHTFGHGKAESLAALAQSMFISGSALFLFLTGIQHLITPTPMNEPGVGIVVTLIALVCTIILVTFQRWVVRKTQSQAVRADMLHYQSDVMMNGAILVALGLAWYGWHRADALFALGIGIYILYSALRMGYEAVQSLLDRALPDEERQEIIDIVTSWPGVNGAHDLRTRQSGPTRFIQIHLEMEDNLPLVQAHLVAEQVEQAILRRFPGSDVIIHQDPCSVVPREGKRFELS.

The next 4 membrane-spanning stretches (helical) occupy residues 12 to 32 (AAIA…FAWW), 39 to 59 (ILAA…NLLV), 82 to 102 (AALA…LTGI), and 114 to 134 (PGVG…LVTF). Residues Asp-45 and Asp-49 each coordinate Zn(2+). Zn(2+) contacts are provided by His-153 and Asp-157. The helical transmembrane segment at 164-184 (ILVALGLAWYGWHRADALFAL) threads the bilayer.

Belongs to the cation diffusion facilitator (CDF) transporter (TC 2.A.4) family. FieF subfamily. In terms of assembly, homodimer.

Its subcellular location is the cell inner membrane. The catalysed reaction is Zn(2+)(in) + H(+)(out) = Zn(2+)(out) + H(+)(in). It carries out the reaction Cd(2+)(in) + H(+)(out) = Cd(2+)(out) + H(+)(in). The enzyme catalyses Fe(2+)(in) + H(+)(out) = Fe(2+)(out) + H(+)(in). Functionally, divalent metal cation transporter which exports Zn(2+), Cd(2+) and possibly Fe(2+). May be involved in zinc and iron detoxification by efflux. The chain is Cation-efflux pump FieF from Citrobacter koseri (strain ATCC BAA-895 / CDC 4225-83 / SGSC4696).